The sequence spans 85 residues: Translational regulator CsrA (85 aa).

Belongs to the CsrA/RsmA family. Homodimer; the beta-strands of each monomer intercalate to form a hydrophobic core, while the alpha-helices form wings that extend away from the core.

The protein resides in the cytoplasm. A translational regulator that binds mRNA to regulate translation initiation and/or mRNA stability. Usually binds in the 5'-UTR at or near the Shine-Dalgarno sequence preventing ribosome-binding, thus repressing translation. Its main target seems to be the major flagellin gene, while its function is anatagonized by FliW. This Leifsonia xyli subsp. xyli (strain CTCB07) protein is Translational regulator CsrA.